Here is a 652-residue protein sequence, read N- to C-terminus: Phosphomethylpyrimidine synthase (652 aa).

Substrate contacts are provided by residues Asn235, Met264, Tyr293, His329, 349 to 351 (SRG), 390 to 393 (DGMR), and Glu429. His433 contacts Zn(2+). Tyr456 lines the substrate pocket. His497 provides a ligand contact to Zn(2+). [4Fe-4S] cluster contacts are provided by Cys577, Cys580, and Cys585.

It belongs to the ThiC family. As to quaternary structure, homodimer. It depends on [4Fe-4S] cluster as a cofactor.

The catalysed reaction is 5-amino-1-(5-phospho-beta-D-ribosyl)imidazole + S-adenosyl-L-methionine = 4-amino-2-methyl-5-(phosphooxymethyl)pyrimidine + CO + 5'-deoxyadenosine + formate + L-methionine + 3 H(+). The protein operates within cofactor biosynthesis; thiamine diphosphate biosynthesis. Catalyzes the synthesis of the hydroxymethylpyrimidine phosphate (HMP-P) moiety of thiamine from aminoimidazole ribotide (AIR) in a radical S-adenosyl-L-methionine (SAM)-dependent reaction. This chain is Phosphomethylpyrimidine synthase, found in Shewanella woodyi (strain ATCC 51908 / MS32).